The sequence spans 100 residues: Aspartyl/glutamyl-tRNA(Asn/Gln) amidotransferase subunit C (100 aa).

The protein belongs to the GatC family. In terms of assembly, heterotrimer of A, B and C subunits.

The enzyme catalyses L-glutamyl-tRNA(Gln) + L-glutamine + ATP + H2O = L-glutaminyl-tRNA(Gln) + L-glutamate + ADP + phosphate + H(+). The catalysed reaction is L-aspartyl-tRNA(Asn) + L-glutamine + ATP + H2O = L-asparaginyl-tRNA(Asn) + L-glutamate + ADP + phosphate + 2 H(+). Functionally, allows the formation of correctly charged Asn-tRNA(Asn) or Gln-tRNA(Gln) through the transamidation of misacylated Asp-tRNA(Asn) or Glu-tRNA(Gln) in organisms which lack either or both of asparaginyl-tRNA or glutaminyl-tRNA synthetases. The reaction takes place in the presence of glutamine and ATP through an activated phospho-Asp-tRNA(Asn) or phospho-Glu-tRNA(Gln). In Staphylococcus aureus (strain Newman), this protein is Aspartyl/glutamyl-tRNA(Asn/Gln) amidotransferase subunit C.